A 670-amino-acid chain; its full sequence is DNA ligase (670 aa).

NAD(+)-binding positions include 32–36 (DAEYD), 81–82 (SL), and Glu110. Lys112 (N6-AMP-lysine intermediate) is an active-site residue. NAD(+)-binding residues include Arg133, Glu170, Lys289, and Lys313. The Zn(2+) site is built by Cys407, Cys410, Cys425, and Cys431. One can recognise a BRCT domain in the interval 590-670 (ESQLSLKGQT…ALMDLLNAAN (81 aa)).

The protein belongs to the NAD-dependent DNA ligase family. LigA subfamily. It depends on Mg(2+) as a cofactor. The cofactor is Mn(2+).

The enzyme catalyses NAD(+) + (deoxyribonucleotide)n-3'-hydroxyl + 5'-phospho-(deoxyribonucleotide)m = (deoxyribonucleotide)n+m + AMP + beta-nicotinamide D-nucleotide.. Its function is as follows. DNA ligase that catalyzes the formation of phosphodiester linkages between 5'-phosphoryl and 3'-hydroxyl groups in double-stranded DNA using NAD as a coenzyme and as the energy source for the reaction. It is essential for DNA replication and repair of damaged DNA. The protein is DNA ligase of Shewanella frigidimarina (strain NCIMB 400).